Reading from the N-terminus, the 135-residue chain is Large ribosomal subunit protein bL19 (135 aa).

Belongs to the bacterial ribosomal protein bL19 family.

Functionally, this protein is located at the 30S-50S ribosomal subunit interface and may play a role in the structure and function of the aminoacyl-tRNA binding site. The polypeptide is Large ribosomal subunit protein bL19 (Xanthomonas oryzae pv. oryzae (strain KACC10331 / KXO85)).